The chain runs to 322 residues: Hapalindole dimethylallyltransferase (322 aa).

Residues Arg-46, Arg-60, Lys-115, Asn-166, Tyr-168, Arg-221, Tyr-225, and Lys-275 each contribute to the dimethylallyl diphosphate site.

Belongs to the aromatic prenyltransferase family.

It carries out the reaction hapalindole G + dimethylallyl diphosphate = ambiguine A + diphosphate. The catalysed reaction is hapalindole U + dimethylallyl diphosphate + H(+) = ambiguine H + diphosphate. Its activity is regulated as follows. Activity is slightly increased in the presence of Mg(2+). Its function is as follows. Prenyltransferase involved in the biosynthesis of ambiguines, a family of hapalindole-type alkaloids. Catalyzes the reverse prenylation of hapalindole G or U at the C2 position with dimethylallyl diphosphate (DMAPP) to generate ambiguine A or H, respectively. In addition, accepts hapalindole A, an epimer of hapalindole G, and catalyzes normal prenylation at its C2 position. The sequence is that of Hapalindole dimethylallyltransferase from Fischerella ambigua (strain UTEX 1903).